A 552-amino-acid polypeptide reads, in one-letter code: Urocanate hydratase (552 aa).

NAD(+)-binding positions include 48–49 (GG), glutamine 126, 172–174 (GMG), aspartate 192, 238–239 (NA), 259–263 (QTSAH), 268–269 (YL), and tyrosine 317. Cysteine 405 is an active-site residue. Glycine 487 serves as a coordination point for NAD(+).

It belongs to the urocanase family. Requires NAD(+) as cofactor.

The protein resides in the cytoplasm. It carries out the reaction 4-imidazolone-5-propanoate = trans-urocanate + H2O. It participates in amino-acid degradation; L-histidine degradation into L-glutamate; N-formimidoyl-L-glutamate from L-histidine: step 2/3. Functionally, catalyzes the conversion of urocanate to 4-imidazolone-5-propionate. This chain is Urocanate hydratase, found in Streptomyces griseus subsp. griseus (strain JCM 4626 / CBS 651.72 / NBRC 13350 / KCC S-0626 / ISP 5235).